We begin with the raw amino-acid sequence, 306 residues long: uncharacterized protein (306 aa).

A run of 9 helical transmembrane segments spans residues 6–26, 37–57, 67–87, 91–111, 125–145, 148–168, 177–197, 213–233, and 251–271; these read VQIMISHSLMIGLWASAFPGI, HLALFRLLIGSMALLLFAVLT, IPAIFLLGFLGFAFYHILLNI, TVSAGVASLLVTTAPIFSAML, WLGSMISLLGVLLIAFGAGDF, SMSGILVILLAAFSESIYFVF, GFIPFVTFTIWGGTIPMLVFL, LSIVYLGLLPTVIPYFALAYV, and ALALIISWLWIGEIPTLLSLL. EamA domains are found at residues 17–140 and 160–285; these read GLWA…LIAF and FSES…FTYL.

The protein belongs to the EamA transporter family.

It localises to the cell membrane. This is an uncharacterized protein from Bacillus subtilis (strain 168).